Consider the following 87-residue polypeptide: MAKEELLEMQGVVNDVLPDTRFRVTLENGHELIAYTSGKMKKNHIRILVGDKVTLELSPYDLSKGRITFRHIENRGTPNPQAQRRRY.

One can recognise an S1-like domain in the interval 1–72 (MAKEELLEMQ…SKGRITFRHI (72 aa)).

It belongs to the IF-1 family. Component of the 30S ribosomal translation pre-initiation complex which assembles on the 30S ribosome in the order IF-2 and IF-3, IF-1 and N-formylmethionyl-tRNA(fMet); mRNA recruitment can occur at any time during PIC assembly.

It is found in the cytoplasm. Functionally, one of the essential components for the initiation of protein synthesis. Stabilizes the binding of IF-2 and IF-3 on the 30S subunit to which N-formylmethionyl-tRNA(fMet) subsequently binds. Helps modulate mRNA selection, yielding the 30S pre-initiation complex (PIC). Upon addition of the 50S ribosomal subunit IF-1, IF-2 and IF-3 are released leaving the mature 70S translation initiation complex. The chain is Translation initiation factor IF-1 2 from Dechloromonas aromatica (strain RCB).